We begin with the raw amino-acid sequence, 509 residues long: Zinc finger CCCH-type with G patch domain-containing protein (509 aa).

Residues 41–61 (TRGSEPEATSDTKTPETSDNI) form a disordered region. The segment covering 47-58 (EATSDTKTPETS) has biased composition (polar residues). The segment at 155 to 178 (PCNYFLEGECRFDEVRCRYSHGAL) adopts a C3H1-type zinc-finger fold. The tract at residues 254-278 (DDDLTSESEESNETDGSDAGNDSDM) is disordered. The G-patch domain maps to 310-356 (TRGIGSKLMANMGYIHGTGLGSDGRGIVTPVSAQILPQGRSLDACME). Residues 410–433 (GSQQTENANKKTKPNNLQQHSNKT) form a disordered region. Residues 423–433 (PNNLQQHSNKT) show a composition bias toward polar residues.

It localises to the nucleus. Functionally, transcription repressor. In Drosophila mojavensis (Fruit fly), this protein is Zinc finger CCCH-type with G patch domain-containing protein.